The following is a 379-amino-acid chain: Cobalt-precorrin-5B C(1)-methyltransferase (379 aa).

The protein belongs to the CbiD family.

The catalysed reaction is Co-precorrin-5B + S-adenosyl-L-methionine = Co-precorrin-6A + S-adenosyl-L-homocysteine. The protein operates within cofactor biosynthesis; adenosylcobalamin biosynthesis; cob(II)yrinate a,c-diamide from sirohydrochlorin (anaerobic route): step 6/10. Functionally, catalyzes the methylation of C-1 in cobalt-precorrin-5B to form cobalt-precorrin-6A. In Salmonella typhi, this protein is Cobalt-precorrin-5B C(1)-methyltransferase.